We begin with the raw amino-acid sequence, 344 residues long: Transcription factor HHO3 (344 aa).

2 disordered regions span residues lysine 90 to lysine 122 and alanine 156 to arginine 212. Acidic residues predominate over residues aspartate 97 to glutamate 106. A compositionally biased stretch (low complexity) spans threonine 178–threonine 188. In terms of domain architecture, HTH myb-type spans serine 206–arginine 266. Residues proline 237–arginine 262 constitute a DNA-binding region (H-T-H motif). Residues proline 306–serine 344 form a disordered region. The span at glutamine 310 to glutamate 319 shows a compositional bias: polar residues. Low complexity predominate over residues threonine 330 to serine 344.

Its subcellular location is the nucleus. Probable transcription factor involved in phosphate signaling in roots. This Arabidopsis thaliana (Mouse-ear cress) protein is Transcription factor HHO3.